The primary structure comprises 388 residues: Adenosine deaminase-like protein (388 aa).

The segment covering Met-1–Arg-13 has biased composition (basic residues). A disordered region spans residues Met-1 to Asp-34. Residues Arg-14–Asp-34 are compositionally biased toward basic and acidic residues. Residues His-65 and His-67 each coordinate Zn(2+). N(6)-methyl-AMP contacts are provided by residues His-67, His-114, Thr-146 to Lys-149, Asp-186, and Gly-218. His-245 provides a ligand contact to Zn(2+). N(6)-methyl-AMP contacts are provided by Glu-248, Asp-326, and Asp-327. Glu-248 acts as the Proton donor in catalysis. Asp-326 contacts Zn(2+).

The protein belongs to the metallo-dependent hydrolases superfamily. Adenosine and AMP deaminases family. Monomer. Zn(2+) is required as a cofactor.

It catalyses the reaction N(6)-methyl-AMP + H2O + H(+) = IMP + methylamine. Its function is as follows. Catalyzes the hydrolysis of the free cytosolic methylated adenosine nucleotide N(6)-methyl-AMP (N6-mAMP) to produce inositol monophosphate (IMP) and methylamine. Is required for the catabolism of cytosolic N6-mAMP, which is derived from the degradation of mRNA containing N6-methylated adenine (m6A). In Caenorhabditis elegans, this protein is Adenosine deaminase-like protein.